Reading from the N-terminus, the 2077-residue chain is Large tegument protein deneddylase (2077 aa).

Residues 1 to 231 (MKIITSSTNQ…PDIAIALDKF (231 aa)) form a deubiquitination activity region. The 219-residue stretch at 3–221 (IITSSTNQND…ELLILKTYKD (219 aa)) folds into the Peptidase C76 domain. Residues cysteine 23, aspartate 156, and histidine 158 contribute to the active site. A region of interest (interaction with inner tegument protein) is located at residue serine 287. The disordered stretch occupies residues 1982–2004 (PPNNTESTRPGKQTSETLTNKNL).

The protein belongs to the herpesviridae large tegument protein family. Interacts with host CUL1 and CUL4A; these interactions inhibit the E3 ligase activity of cullins. Interacts with inner tegument protein. Interacts with capsid vertex specific component CVC2. Interacts with the major capsid protein/MCP.

The protein localises to the virion tegument. It is found in the host cytoplasm. Its subcellular location is the host nucleus. The catalysed reaction is Thiol-dependent hydrolysis of ester, thioester, amide, peptide and isopeptide bonds formed by the C-terminal Gly of ubiquitin (a 76-residue protein attached to proteins as an intracellular targeting signal).. Its function is as follows. Large tegument protein that plays multiple roles in the viral cycle. During viral entry, remains associated with the capsid while most of the tegument is detached and participates in the capsid transport toward the host nucleus. Plays a role in the routing of the capsid at the nuclear pore complex and subsequent uncoating. Within the host nucleus, acts as a deneddylase and promotes the degradation of nuclear CRLs (cullin-RING ubiquitin ligases) and thereby stabilizes nuclear CRL substrates, while cytoplasmic CRLs remain unaffected. These modifications prevent host cell cycle S-phase progression and create a favorable environment allowing efficient viral genome replication. Participates later in the secondary envelopment of capsids. Indeed, plays a linker role for the association of the outer viral tegument to the capsids together with the inner tegument protein. The chain is Large tegument protein deneddylase (U31) from Homo sapiens (Human).